Here is a 211-residue protein sequence, read N- to C-terminus: Probable nicotinate-nucleotide adenylyltransferase (211 aa).

Belongs to the NadD family.

The catalysed reaction is nicotinate beta-D-ribonucleotide + ATP + H(+) = deamido-NAD(+) + diphosphate. It functions in the pathway cofactor biosynthesis; NAD(+) biosynthesis; deamido-NAD(+) from nicotinate D-ribonucleotide: step 1/1. Catalyzes the reversible adenylation of nicotinate mononucleotide (NaMN) to nicotinic acid adenine dinucleotide (NaAD). In Gemmatimonas aurantiaca (strain DSM 14586 / JCM 11422 / NBRC 100505 / T-27), this protein is Probable nicotinate-nucleotide adenylyltransferase.